Consider the following 195-residue polypeptide: Nicotinamide riboside kinase 1 (195 aa).

10–18 (GVTNGGKTT) is a binding site for ATP. The Mg(2+) site is built by threonine 17 and aspartate 36. Aspartate 36 acts as the Proton acceptor in catalysis. Substrate is bound by residues 36–39 (DDFF) and 55–56 (YD). Arginine 128 serves as a coordination point for ATP. Substrate is bound by residues arginine 129 and 134–135 (YE). ATP contacts are provided by residues 132 to 134 (RVY) and 172 to 174 (RSE).

This sequence belongs to the uridine kinase family. NRK subfamily. In terms of assembly, monomer.

The enzyme catalyses beta-nicotinamide D-riboside + ATP = beta-nicotinamide D-ribonucleotide + ADP + H(+). It catalyses the reaction beta-D-ribosylnicotinate + ATP = nicotinate beta-D-ribonucleotide + ADP + H(+). The protein operates within cofactor biosynthesis; NAD(+) biosynthesis. In terms of biological role, catalyzes the phosphorylation of nicotinamide riboside (NR) and nicotinic acid riboside (NaR) to form nicotinamide mononucleotide (NMN) and nicotinic acid mononucleotide (NaMN). In Rattus norvegicus (Rat), this protein is Nicotinamide riboside kinase 1 (Nmrk1).